A 347-amino-acid polypeptide reads, in one-letter code: 2-hydroxyacid dehydrogenase A (347 aa).

NAD(+) contacts are provided by residues 157-158 (RI), D177, 234-236 (TSR), and D260. R236 is a catalytic residue. The active site involves E265.

The protein belongs to the D-isomer specific 2-hydroxyacid dehydrogenase family.

The catalysed reaction is a (2R)-2-hydroxycarboxylate + NADP(+) = a 2-oxocarboxylate + NADPH + H(+). Its function is as follows. 2-hydroxyacid dehydrogenase that is capable to reduce pyruvate, hydroxypyruvate and glyoxylate in a NADPH- or NADH-dependent manner. In contrast to 2-HadhD/morA, does not recognize 4-methyl-2-oxopentanoate (MOA) as a substrate. In Aspergillus oryzae (strain ATCC 42149 / RIB 40) (Yellow koji mold), this protein is 2-hydroxyacid dehydrogenase A.